A 502-amino-acid chain; its full sequence is D-erythritol 1-phosphate dehydrogenase (502 aa).

8–36 provides a ligand contact to FAD; sequence DLFVIGGGINGAGVARDAAGRGLKVVLAE.

Belongs to the FAD-dependent glycerol-3-phosphate dehydrogenase family. The cofactor is FAD.

It carries out the reaction D-erythritol 1-phosphate + NADP(+) = D-erythrulose 1-phosphate + NADPH + H(+). It participates in carbohydrate metabolism; erythritol degradation. Functionally, catalyzes the oxydation of D-erythritol 1-phosphate to D-erythrulose 1-phosphate. This Brucella abortus (strain 2308) protein is D-erythritol 1-phosphate dehydrogenase.